A 165-amino-acid polypeptide reads, in one-letter code: Type IV major pilin protein PilE1 (165 aa).

Positions 1–7 (MNTLQKG) are cleaved as a propeptide — leader sequence. Phenylalanine 8 carries the post-translational modification N-methylphenylalanine. Residues 8 to 28 (FTLIELMIVIAIVGILAAVAL) traverse the membrane as a helical segment. O-linked (DADDGlc) serine glycosylation occurs at serine 70. The residue at position 75 (serine 75) is an O-(2-aminoethylphosphoryl)serine; alternate. Serine 75 carries the post-translational modification O-(2-cholinephosphoryl)serine; alternate. Serine 75 bears the Phosphoserine; alternate mark. Serine 101 is subject to O-(sn-1-glycerophosphoryl)serine; partial. A disulfide bridge links cysteine 128 with cysteine 158. Residues 137–153 (DDTVADAKDGKEIDTKH) are compositionally biased toward basic and acidic residues. Positions 137 to 165 (DDTVADAKDGKEIDTKHLPSTCRDNFDAK) are disordered.

The protein belongs to the N-Me-Phe pilin family. As to quaternary structure, the pili are polar flexible filaments of about 5.4 nanometers diameter and 2.5 micrometers average length; they consist of only a single polypeptide chain arranged in a helical configuration of five subunits per turn in the assembled pilus. The O-linked glycan identified as Gal-GlcNAc disaccharide in PubMed:7477282 and PubMed:10048019 is now identified as either a hexosyl-diacetamidotrideoxyhexoside (DATDHex) by mass spectrometry in PubMed:15249686, or alpha-D-galactopyranosyl-(1-&gt;3)-2,4-diacetamido-2,4-dideoxy-beta-D-glucopyranoside (DADDGlc) by X-ray diffraction in PubMed:16949362. It is not clear whether there is a chemical difference in the glycosylation of the two derivatives of strain MS11 used in these experiments, or not. Post-translationally, in some MS11 derivative strains, Ser-75 is modified to O-(2-aminoethylphosphoryl)serine, and in some other derivatives that can be secondarily modified to O-(2-cholinephosphoryl)serine by N-methylation.

The protein resides in the fimbrium. It is found in the membrane. In terms of biological role, major component of the type IV pilus (T4P) that plays a role in cellular adherence, microcolony formation, resistance to neutrophil mediated killing, twitching motility as well as transformation. Mediates the attachment and the formation of bacterial microcolonies on host epithelial cells. Mechanistically, pili retractation induces host NF-kappa-B activation in infected cells, which is temporally associated with the formation of gonococcal microcolonies. The sequence is that of Type IV major pilin protein PilE1 (pilE1) from Neisseria gonorrhoeae.